Here is a 152-residue protein sequence, read N- to C-terminus: Large ribosomal subunit protein uL15 (152 aa).

Residues 1-54 (MGLKLNELSPGVGAKKTAHRKGRGIGSGLGKTGGRGVKGQKSRSGSGVRRGFEG) form a disordered region. A compositionally biased stretch (gly residues) spans 24-37 (GIGSGLGKTGGRGV).

The protein belongs to the universal ribosomal protein uL15 family. In terms of assembly, part of the 50S ribosomal subunit.

Binds to the 23S rRNA. The chain is Large ribosomal subunit protein uL15 from Psychrobacter sp. (strain PRwf-1).